The following is a 262-amino-acid chain: tRNA pseudouridine synthase A (262 aa).

D52 functions as the Nucleophile in the catalytic mechanism. Position 110 (Y110) interacts with substrate.

This sequence belongs to the tRNA pseudouridine synthase TruA family. As to quaternary structure, homodimer.

It carries out the reaction uridine(38/39/40) in tRNA = pseudouridine(38/39/40) in tRNA. In terms of biological role, formation of pseudouridine at positions 38, 39 and 40 in the anticodon stem and loop of transfer RNAs. The protein is tRNA pseudouridine synthase A of Chromobacterium violaceum (strain ATCC 12472 / DSM 30191 / JCM 1249 / CCUG 213 / NBRC 12614 / NCIMB 9131 / NCTC 9757 / MK).